Reading from the N-terminus, the 885-residue chain is Chromatin structure-remodeling complex protein RSC3 (885 aa).

The zn(2)-C6 fungal-type DNA-binding region spans 14–42 (CVQCRKRKIGCDRVKPICGNCMKHNKMDC). Phosphoserine occurs at positions 95 and 236.

As to quaternary structure, forms a heteromer with RSC30. Interacts with LDB7 and NPL6. Component of the two forms of the RSC complex composed of at least either RSC1 or RSC2, and ARP7, ARP9, LDB7, NPL6, RSC3, RSC30, RSC4, RSC58, RSC6, RSC8, RSC9, SFH1, STH1, HTL1 and probably RTT102. The complexes interact with histone and histone variant components of centromeric chromatin. Component of a fungal-specific module (HTL1-LDB7-NPL6-RSC3-RSC30) within the RSC complex.

It is found in the nucleus. Its function is as follows. Component of the chromatin structure-remodeling complex (RSC), which is involved in transcription regulation and nucleosome positioning. RSC is responsible for the transfer of a histone octamer from a nucleosome core particle to naked DNA. The reaction requires ATP and involves an activated RSC-nucleosome intermediate. Remodeling reaction also involves DNA translocation, DNA twist and conformational change. As a reconfigurer of centromeric and flanking nucleosomes, RSC complex is required both for proper kinetochore function in chromosome segregation and, via a PKC1-dependent signaling pathway, for organization of the cellular cytoskeleton. This subunit is required for transcription of ribosomal protein genes and genes involved in the integrity of the cell wall, and also for proper metaphase progression. Together with HTL1, LDB7, NPL6, RSC30 components, defines a fungal-specific module within the RSC complex that plays a role in many cellular functions including the maintenance of cell wall integrity. The polypeptide is Chromatin structure-remodeling complex protein RSC3 (RSC3) (Saccharomyces cerevisiae (strain ATCC 204508 / S288c) (Baker's yeast)).